A 213-amino-acid polypeptide reads, in one-letter code: MKDTYRHQGKRQQLVKTVKKKGITDEKVLGAIGNIPRHLFMDSSFEDHAYQDKAFPIAADQTISQPYTVAFQSELLEIKKGEKVLEVGTGSGYQTAVLCLLGAKVYSIERQRELYKKTKSFLSKLGYRPKYLSFGDGYKGIPEYAPYDKIIVTAGAPEVPRDLLSQLKVGGRLVIPVGTDVQTMTLFIRKSAKEFDKNEFGAFRFVPLLEDKN.

Residue Ser64 is part of the active site.

This sequence belongs to the methyltransferase superfamily. L-isoaspartyl/D-aspartyl protein methyltransferase family.

It localises to the cytoplasm. The enzyme catalyses [protein]-L-isoaspartate + S-adenosyl-L-methionine = [protein]-L-isoaspartate alpha-methyl ester + S-adenosyl-L-homocysteine. Its function is as follows. Catalyzes the methyl esterification of L-isoaspartyl residues in peptides and proteins that result from spontaneous decomposition of normal L-aspartyl and L-asparaginyl residues. It plays a role in the repair and/or degradation of damaged proteins. This is Protein-L-isoaspartate O-methyltransferase from Christiangramia forsetii (strain DSM 17595 / CGMCC 1.15422 / KT0803) (Gramella forsetii).